A 1063-amino-acid polypeptide reads, in one-letter code: Integrin alpha-8 (1063 aa).

An N-terminal signal peptide occupies residues 1–38 (MSPGASRGPRGSQAPLIAPLCCAAAALGMLLWSPACQA). Over 39–1012 (FNLDVEKLTV…TPNVSFSIPL (974 aa)) the chain is Extracellular. 7 FG-GAP repeats span residues 44–105 (EKLT…GSAQ), 122–183 (NGTK…AYAE), 188–240 (RNSN…IANY), 253–306 (KQTE…STDM), 307–372 (TFIQ…LLFR), 373–431 (DPQI…GLNT), and 435–498 (QVLQ…LHPM). N-linked (GlcNAc...) asparagine glycosylation occurs at Asn-81. Cys-96 and Cys-106 are oxidised to a cystine. A glycan (N-linked (GlcNAc...) asparagine) is linked at Asn-122. Cys-150 and Cys-171 are joined by a disulfide. Asn-177 carries N-linked (GlcNAc...) asparagine glycosylation. Cys-187 and Cys-200 are oxidised to a cystine. Residue Asn-239 is glycosylated (N-linked (GlcNAc...) asparagine). Residues Glu-275, Thr-277, Asp-279, and Glu-283 each coordinate Ca(2+). Residues Asn-302 and Asn-311 are each glycosylated (N-linked (GlcNAc...) asparagine). Ca(2+)-binding residues include Asp-329, Asn-331, Asp-333, Leu-335, Asp-337, Asp-395, Asn-397, Asp-399, Tyr-401, and Asp-403. Positions 455-457 (RGD) match the Cell attachment site motif. The Ca(2+) site is built by Asp-459, Asp-461, Asn-463, Tyr-465, and Asp-467. N-linked (GlcNAc...) asparagine glycosylation is present at Asn-504. 2 disulfides stabilise this stretch: Cys-507–Cys-518 and Cys-524–Cys-580. Asn-601 and Asn-605 each carry an N-linked (GlcNAc...) asparagine glycan. Intrachain disulfides connect Cys-641/Cys-647 and Cys-713/Cys-726. Asn-719, Asn-737, Asn-753, Asn-780, Asn-896, and Asn-923 each carry an N-linked (GlcNAc...) asparagine glycan. 2 disulfide bridges follow: Cys-867–Cys-924 and Cys-929–Cys-934. N-linked (GlcNAc...) asparagine glycosylation is present at Asn-1005. A helical transmembrane segment spans residues 1013–1033 (WVIILAILLGLLVLAILTLAL). At 1034-1063 (WKCGFFDRARPPQEDMTDREQLTNDKTPEA) the chain is on the cytoplasmic side.

The protein belongs to the integrin alpha chain family. Heterodimer of an alpha and a beta subunit. The alpha subunit is composed of a heavy and a light chain linked by a disulfide bond. Alpha-8 associates with beta-1. Expressed in mesenchymal cells, including alveolar myofibroblasts, kidney mesangial cells and hepatic stellar cells and vascular and visceral smooth muscle (at protein level).

It is found in the membrane. The protein localises to the cell membrane. In terms of biological role, integrin alpha-8/beta-1 functions in the genesis of kidney and probably of other organs by regulating the recruitment of mesenchymal cells into epithelial structures. It recognizes the sequence R-G-D in a wide array of ligands including TNC, FN1, SPP1 TGFB1, TGFB3 and VTN. NPNT is probably its functional ligand in kidney genesis. Neuronal receptor for TNC it mediates cell-cell interactions and regulates neurite outgrowth of sensory and motor neurons. The chain is Integrin alpha-8 (ITGA8) from Homo sapiens (Human).